We begin with the raw amino-acid sequence, 357 residues long: UDP-N-acetylglucosamine--N-acetylmuramyl-(pentapeptide) pyrophosphoryl-undecaprenol N-acetylglucosamine transferase (357 aa).

UDP-N-acetyl-alpha-D-glucosamine contacts are provided by residues 14–16 (TGG), Asn128, Arg169, Ser193, Ile248, and Gln292.

The protein belongs to the glycosyltransferase 28 family. MurG subfamily.

It localises to the cell inner membrane. It carries out the reaction di-trans,octa-cis-undecaprenyl diphospho-N-acetyl-alpha-D-muramoyl-L-alanyl-D-glutamyl-meso-2,6-diaminopimeloyl-D-alanyl-D-alanine + UDP-N-acetyl-alpha-D-glucosamine = di-trans,octa-cis-undecaprenyl diphospho-[N-acetyl-alpha-D-glucosaminyl-(1-&gt;4)]-N-acetyl-alpha-D-muramoyl-L-alanyl-D-glutamyl-meso-2,6-diaminopimeloyl-D-alanyl-D-alanine + UDP + H(+). The protein operates within cell wall biogenesis; peptidoglycan biosynthesis. Functionally, cell wall formation. Catalyzes the transfer of a GlcNAc subunit on undecaprenyl-pyrophosphoryl-MurNAc-pentapeptide (lipid intermediate I) to form undecaprenyl-pyrophosphoryl-MurNAc-(pentapeptide)GlcNAc (lipid intermediate II). The protein is UDP-N-acetylglucosamine--N-acetylmuramyl-(pentapeptide) pyrophosphoryl-undecaprenol N-acetylglucosamine transferase of Bdellovibrio bacteriovorus (strain ATCC 15356 / DSM 50701 / NCIMB 9529 / HD100).